The chain runs to 88 residues: Large ribosomal subunit protein bL27 (88 aa).

Positions 1–13 (MATKKSGGSSSNG) are enriched in low complexity. The segment at 1–24 (MATKKSGGSSSNGRDSRGRRLGVK) is disordered.

The protein belongs to the bacterial ribosomal protein bL27 family.

The chain is Large ribosomal subunit protein bL27 from Ehrlichia ruminantium (strain Gardel).